Reading from the N-terminus, the 472-residue chain is Squamosa promoter-binding-like protein 18 (472 aa).

The disordered stretch occupies residues 89-110; sequence AKVPPSTSTLKRPRGGGGGGGG. The SBP-type zinc finger occupies 112 to 189; it reads CPSCAVDGCK…DGHNRRRRKP (78 aa). The Zn(2+) site is built by Cys115, Cys120, Cys137, His140, Cys156, Cys159, His163, and Cys175. The short motif at 172–188 is the Bipartite nuclear localization signal element; sequence KRSCRKRLDGHNRRRRK. 3 disordered regions span residues 179–218, 233–261, and 358–381; these read LDGH…RPEP, SHHH…TAAF, and SVDV…HHHH. The span at 192-209 shows a compositional bias: polar residues; it reads DSMSSGSFMTSQQGTRFA. Residues 252–261 are compositionally biased toward low complexity; the sequence is SPSSATTAAF.

As to expression, expressed in young panicles.

The protein resides in the nucleus. Functionally, trans-acting factor that binds specifically to the consensus nucleotide sequence 5'-TNCGTACAA-3'. May be involved in panicle development. This Oryza sativa subsp. japonica (Rice) protein is Squamosa promoter-binding-like protein 18 (SPL18).